The chain runs to 1892 residues: Protein TIC 214 (1892 aa).

The next 6 helical transmembrane spans lie at 18–38 (IINS…FSIG), 64–84 (FITG…HLAL), 87–107 (PHTI…WNNH), 124–144 (LSIQ…HFIL), 172–192 (VGWL…LVWI), and 221–241 (IFSI…PSPI). Disordered regions lie at residues 250–300 (SKTE…EGWD), 794–814 (REEQ…ENKR), and 1581–1609 (RIQE…LGPV). Acidic residues predominate over residues 256 to 268 (VESEEEKDVEIET). Residues 1581–1602 (RIQEEKEPASQGEKERGSDIEN) are compositionally biased toward basic and acidic residues.

The protein belongs to the TIC214 family. In terms of assembly, part of the Tic complex.

It is found in the plastid. The protein localises to the chloroplast inner membrane. Its function is as follows. Involved in protein precursor import into chloroplasts. May be part of an intermediate translocation complex acting as a protein-conducting channel at the inner envelope. This chain is Protein TIC 214, found in Nicotiana tomentosiformis (Tobacco).